The primary structure comprises 930 residues: Isoleucine--tRNA ligase (930 aa).

Residues 57–67 carry the 'HIGH' region motif; the sequence is PYANGNIHVGH. Glu-554 contacts L-isoleucyl-5'-AMP. Positions 595 to 599 match the 'KMSKS' region motif; the sequence is KMSKS. Lys-598 contacts ATP. The Zn(2+) site is built by Cys-888, Cys-891, Cys-908, and Cys-911.

The protein belongs to the class-I aminoacyl-tRNA synthetase family. IleS type 1 subfamily. In terms of assembly, monomer. The cofactor is Zn(2+).

It localises to the cytoplasm. It carries out the reaction tRNA(Ile) + L-isoleucine + ATP = L-isoleucyl-tRNA(Ile) + AMP + diphosphate. Its function is as follows. Catalyzes the attachment of isoleucine to tRNA(Ile). As IleRS can inadvertently accommodate and process structurally similar amino acids such as valine, to avoid such errors it has two additional distinct tRNA(Ile)-dependent editing activities. One activity is designated as 'pretransfer' editing and involves the hydrolysis of activated Val-AMP. The other activity is designated 'posttransfer' editing and involves deacylation of mischarged Val-tRNA(Ile). The chain is Isoleucine--tRNA ligase from Streptococcus mutans serotype c (strain ATCC 700610 / UA159).